Reading from the N-terminus, the 199-residue chain is 3-isopropylmalate dehydratase small subunit (199 aa).

Belongs to the LeuD family. LeuD type 1 subfamily. As to quaternary structure, heterodimer of LeuC and LeuD.

It catalyses the reaction (2R,3S)-3-isopropylmalate = (2S)-2-isopropylmalate. It participates in amino-acid biosynthesis; L-leucine biosynthesis; L-leucine from 3-methyl-2-oxobutanoate: step 2/4. Functionally, catalyzes the isomerization between 2-isopropylmalate and 3-isopropylmalate, via the formation of 2-isopropylmaleate. The protein is 3-isopropylmalate dehydratase small subunit of Kocuria rhizophila (strain ATCC 9341 / DSM 348 / NBRC 103217 / DC2201).